A 136-amino-acid chain; its full sequence is Protein NrdI (136 aa).

It belongs to the NrdI family.

Functionally, probably involved in ribonucleotide reductase function. The polypeptide is Protein NrdI (Escherichia coli O1:K1 / APEC).